Consider the following 825-residue polypeptide: Putative pentatricopeptide repeat-containing protein At2g01510 (825 aa).

PPR repeat units lie at residues aspartate 47–lysine 77, asparagine 78–arginine 108, threonine 109–threonine 143, aspartate 146–threonine 180, phenylalanine 183–lysine 213, aspartate 214–proline 248, serine 249–arginine 283, aspartate 284–leucine 314, aspartate 315–arginine 349, arginine 350–serine 384, isoleucine 385–arginine 415, threonine 416–alanine 450, aspartate 451–glutamate 485, asparagine 486–arginine 516, asparagine 517–proline 551, aspartate 552–proline 587, and lysine 588–glutamate 618. A type E motif region spans residues methionine 623 to asparagine 699. The type E(+) motif stretch occupies residues histidine 700–glutamate 730. The segment at arginine 731–tryptophan 825 is type DYW motif.

It belongs to the PPR family. PCMP-H subfamily.

This chain is Putative pentatricopeptide repeat-containing protein At2g01510 (PCMP-H36), found in Arabidopsis thaliana (Mouse-ear cress).